The chain runs to 209 residues: Large ribosomal subunit protein bL25 (209 aa).

2 disordered regions span residues 1 to 20 (MSKSYTLKAEKRERVGKGSS) and 190 to 209 (LDVSDETSEQEKDEGETQTS). The span at 8 to 20 (KAEKRERVGKGSS) shows a compositional bias: basic and acidic residues. Residues 192 to 209 (VSDETSEQEKDEGETQTS) are compositionally biased toward acidic residues.

The protein belongs to the bacterial ribosomal protein bL25 family. CTC subfamily. Part of the 50S ribosomal subunit; part of the 5S rRNA/L5/L18/L25 subcomplex. Contacts the 5S rRNA. Binds to the 5S rRNA independently of L5 and L18.

This is one of the proteins that binds to the 5S RNA in the ribosome where it forms part of the central protuberance. The sequence is that of Large ribosomal subunit protein bL25 from Bartonella tribocorum (strain CIP 105476 / IBS 506).